Consider the following 199-residue polypeptide: Recombination protein RecR (199 aa).

The segment at 56–71 (CSICFNWSAEDPCEIC) adopts a C4-type zinc-finger fold. Residues 79–174 (STWCVVADVK…GLRMTRLAFG (96 aa)) form the Toprim domain.

This sequence belongs to the RecR family.

May play a role in DNA repair. It seems to be involved in an RecBC-independent recombinational process of DNA repair. It may act with RecF and RecO. This Synechococcus sp. (strain JA-3-3Ab) (Cyanobacteria bacterium Yellowstone A-Prime) protein is Recombination protein RecR.